Here is a 377-residue protein sequence, read N- to C-terminus: Nitric oxide reductase FlRd-NAD(+) reductase (377 aa).

It belongs to the FAD-dependent oxidoreductase family. Requires FAD as cofactor.

Its subcellular location is the cytoplasm. It catalyses the reaction 2 reduced [nitric oxide reductase rubredoxin domain] + NAD(+) + H(+) = 2 oxidized [nitric oxide reductase rubredoxin domain] + NADH. Its pathway is nitrogen metabolism; nitric oxide reduction. Its function is as follows. One of at least two accessory proteins for anaerobic nitric oxide (NO) reductase. Reduces the rubredoxin moiety of NO reductase. This is Nitric oxide reductase FlRd-NAD(+) reductase from Klebsiella pneumoniae (strain 342).